The following is a 430-amino-acid chain: MLDLKQIRENPTAIQNRLNQRGGGASYDLEPILAIAAEQKAKESERTVLQSRSNEIGKLIGQKIGQGADPKGEEIQTLREEGNSLKIQLADLEPQEKDLKEQLQKLLLELPNLPCETTPIGASEADNIEVKRWGDQYLKAETVGILPHWEIGEKLGIIDSERGVKVAQSRFISLMKAGAALERALINFMLERHIGVGYQEIMPPILVNSDSLLGTGQLPKFAEESFQCRGDDLWLIPTAEVPVTNLYRDEVLDLEQLPIKHCAYTPCFRREAGSYGRDTKGLIRLHQFNKVELVKLVKPEESAAEHQALVADAEAILQALELPYRVVELCTGDLGFGAAKCYDLEVWLPSANTYREISSCSNFHDFQARRANIRYKEKGKKGTQFVHTLNGSGLAIGRTMAAILENYYEPSSGQVKVPVVLQDFLKRDYL.

238-240 (TAE) is an L-serine binding site. 269–271 (RRE) is an ATP binding site. E292 contributes to the L-serine binding site. 356–359 (EISS) is an ATP binding site. L-serine is bound at residue S392.

It belongs to the class-II aminoacyl-tRNA synthetase family. Type-1 seryl-tRNA synthetase subfamily. As to quaternary structure, homodimer. The tRNA molecule binds across the dimer.

The protein resides in the cytoplasm. The catalysed reaction is tRNA(Ser) + L-serine + ATP = L-seryl-tRNA(Ser) + AMP + diphosphate + H(+). The enzyme catalyses tRNA(Sec) + L-serine + ATP = L-seryl-tRNA(Sec) + AMP + diphosphate + H(+). It participates in aminoacyl-tRNA biosynthesis; selenocysteinyl-tRNA(Sec) biosynthesis; L-seryl-tRNA(Sec) from L-serine and tRNA(Sec): step 1/1. Functionally, catalyzes the attachment of serine to tRNA(Ser). Is also able to aminoacylate tRNA(Sec) with serine, to form the misacylated tRNA L-seryl-tRNA(Sec), which will be further converted into selenocysteinyl-tRNA(Sec). In Synechocystis sp. (strain ATCC 27184 / PCC 6803 / Kazusa), this protein is Serine--tRNA ligase.